The chain runs to 400 residues: MGVKIIVPSLGESVTEATIAKWYKKEGDAVKTDELLLEIETEKVTLEVNSPCNGTIGKIIKADGANVAVGEEIGDINEGEAVATNSNEAAKPQTASQPVPEKVPKKPAVANNTLAPSVQKLVTENKLDPNNIKGTGKDGRITKGDVLETMNAPTPAATSTTSSAKASEERVERVRMSRLRKTIAQRLKDSQNTAAILTTFNEIDMSKVIALRGKYKDEFEKKHGVKLGFMSFFVRATIEALKLIPSVNAEIDGDDLVYKNYYDIGVAVGTEQGLVVPVVRDADKMGFADIEKTIGGLAKKARDGKLSMADLSGGTFSISNGGVYGSLLSTPIINPPQSGILGLHKTEERVVAIDGKIEIRPMMYIALSYDHRIIDGKEAVSFLVKIKELIESPEKLLLNL.

The region spanning 2-77 is the Lipoyl-binding domain; the sequence is GVKIIVPSLG…AVGEEIGDIN (76 aa). N6-lipoyllysine is present on Lys-43. The span at 85–97 shows a compositional bias: polar residues; the sequence is NSNEAAKPQTASQ. The disordered stretch occupies residues 85-113; that stretch reads NSNEAAKPQTASQPVPEKVPKKPAVANNT. The region spanning 113-150 is the Peripheral subunit-binding (PSBD) domain; it reads TLAPSVQKLVTENKLDPNNIKGTGKDGRITKGDVLETM. Residues His-371 and Asp-375 contribute to the active site.

It belongs to the 2-oxoacid dehydrogenase family. As to quaternary structure, forms a 24-polypeptide structural core with octahedral symmetry. Part of the 2-oxoglutarate dehydrogenase (OGDH) complex composed of E1 (2-oxoglutarate dehydrogenase), E2 (dihydrolipoamide succinyltransferase) and E3 (dihydrolipoamide dehydrogenase); the complex contains multiple copies of the three enzymatic components (E1, E2 and E3). (R)-lipoate serves as cofactor.

The catalysed reaction is N(6)-[(R)-dihydrolipoyl]-L-lysyl-[protein] + succinyl-CoA = N(6)-[(R)-S(8)-succinyldihydrolipoyl]-L-lysyl-[protein] + CoA. It functions in the pathway amino-acid degradation; L-lysine degradation via saccharopine pathway; glutaryl-CoA from L-lysine: step 6/6. In terms of biological role, E2 component of the 2-oxoglutarate dehydrogenase (OGDH) complex which catalyzes the second step in the conversion of 2-oxoglutarate to succinyl-CoA and CO(2). The protein is Dihydrolipoyllysine-residue succinyltransferase component of 2-oxoglutarate dehydrogenase complex (sucB) of Rickettsia bellii (strain RML369-C).